The sequence spans 906 residues: NACHT, LRR and PYD domains-containing protein 1b allele 4 (906 aa).

Positions 1 to 22 (MEESPPKQKSNTKVAQHEGQQD) are disordered. One can recognise an NACHT domain in the interval 126 to 435 (QLVIIEGAAG…EFFAAISCIL (310 aa)). 132 to 139 (GAAGIGKS) lines the ATP pocket. LRR repeat units lie at residues 627–647 (NLEG…QSLC) and 684–704 (SLTE…RMLC). The region spanning 789–906 (FWGPTGPVAT…FQEHGSRNAR (118 aa)) is the FIIND (incomplete) domain.

This sequence belongs to the NLRP family. In terms of tissue distribution, expressed in macrophages.

The protein localises to the cytoplasm. It is found in the cytosol. Probable inactive allele of Nlrp1b, which lacks a CARD domain, suggesting that it is not able to form an inflammasome. Contrary to Nlrp1b allele 1, allele 4 is not activated by B.anthracis lethal toxin and no other activation signal is reported. The sequence is that of NACHT, LRR and PYD domains-containing protein 1b allele 4 from Mus musculus (Mouse).